The sequence spans 155 residues: Large ribosomal subunit protein eL24 (155 aa).

Residues 97–129 are compositionally biased toward basic and acidic residues; the sequence is KPEIRKAKRDEKAKADKEKKKADKAARKADKAK. Positions 97–155 are disordered; sequence KPEIRKAKRDEKAKADKEKKKADKAARKADKAKSAATQASKISKQQAKGAFQKVAATSR. Polar residues predominate over residues 133–142; the sequence is TQASKISKQQ.

This sequence belongs to the eukaryotic ribosomal protein eL24 family.

The chain is Large ribosomal subunit protein eL24 (RPL24) from Eremothecium gossypii (strain ATCC 10895 / CBS 109.51 / FGSC 9923 / NRRL Y-1056) (Yeast).